The sequence spans 343 residues: MNILSMTYEKFVQKIQELGLEKYRADQILDWIYKKHVFVFEQMTNLSKQHRSLLRENFCIQIPKIVSKRVSSIDKTTKYLYELSDGNTIESVLLFHEGYATACISTQIGCPVKCSFCATGQSGFVRNLDAGEIVSQILAIEKDSKQTVRNIVYMGMGEPLLNYDNVIKSIKILIDKKTKNIGIRRVTLSTVGIPEMILKLSEERLDLNLAISLHASTNEKRDQIIPINRKYSIQEIINAAKNYQERSDRRLTIEYILIKEFNDFDEDARKLAKLLNGLKVFVNLIPVNSTFSNFEKPAKWKINRFKEILINSGIEAEIRYEKGADIEAACGQLRIRNLLSKQL.

The active-site Proton acceptor is Glu-90. Residues His-96–Asp-325 enclose the Radical SAM core domain. The cysteines at positions 103 and 330 are disulfide-linked. Cys-110, Cys-114, and Cys-117 together coordinate [4Fe-4S] cluster. S-adenosyl-L-methionine is bound by residues Gly-157–Glu-158, Ser-189, Ser-212–His-214, and Asn-288. Residue Cys-330 is the S-methylcysteine intermediate of the active site.

This sequence belongs to the radical SAM superfamily. RlmN family. [4Fe-4S] cluster serves as cofactor.

The protein resides in the cytoplasm. The catalysed reaction is adenosine(2503) in 23S rRNA + 2 reduced [2Fe-2S]-[ferredoxin] + 2 S-adenosyl-L-methionine = 2-methyladenosine(2503) in 23S rRNA + 5'-deoxyadenosine + L-methionine + 2 oxidized [2Fe-2S]-[ferredoxin] + S-adenosyl-L-homocysteine. It carries out the reaction adenosine(37) in tRNA + 2 reduced [2Fe-2S]-[ferredoxin] + 2 S-adenosyl-L-methionine = 2-methyladenosine(37) in tRNA + 5'-deoxyadenosine + L-methionine + 2 oxidized [2Fe-2S]-[ferredoxin] + S-adenosyl-L-homocysteine. Specifically methylates position 2 of adenine 2503 in 23S rRNA and position 2 of adenine 37 in tRNAs. The protein is Probable dual-specificity RNA methyltransferase RlmN of Pseudothermotoga lettingae (strain ATCC BAA-301 / DSM 14385 / NBRC 107922 / TMO) (Thermotoga lettingae).